Consider the following 247-residue polypeptide: Carboxy-S-adenosyl-L-methionine synthase (247 aa).

Residues Tyr39, 64–66 (GCS), 89–90 (DN), 117–118 (DI), Asn132, and Arg199 contribute to the S-adenosyl-L-methionine site.

This sequence belongs to the class I-like SAM-binding methyltransferase superfamily. Cx-SAM synthase family. Homodimer.

The enzyme catalyses prephenate + S-adenosyl-L-methionine = carboxy-S-adenosyl-L-methionine + 3-phenylpyruvate + H2O. Its function is as follows. Catalyzes the conversion of S-adenosyl-L-methionine (SAM) to carboxy-S-adenosyl-L-methionine (Cx-SAM). This Shigella sonnei (strain Ss046) protein is Carboxy-S-adenosyl-L-methionine synthase.